The chain runs to 1100 residues: MGNAAGSAEQPAGPAAPPPKQPAPPKQPMPAAGELEERFNRALNCMNLPPDKVQLLSQYDNEKKWELICDQERFQVKNPPAAYIQKLKSYVDTGGVSRKVAADWMSNLGFKRRVQESTQVLRELETSLRTNHIGWVQEFLNEENRGLDVLLEYLAFAQCSVTYDMESTDNGASNSEKNKPLEQSVEDLSKGPPSSVPKSRHLTIKLTPAHSRKALRNSRIVSQKDDVHVCIMCLRAIMNYQSGFSLVMNHPACVNEIALSLNNKNPRTKALVLELLAAVCLVRGGHDIILAAFDNFKEVCGEQHRFEKLMEYFRNEDSNIDFMVACMQFINIVVHSVENMNFRVFLQYEFTHLGLDLYLERLRLTESDKLQVQIQAYLDNIFDVGALLEDTETKNAVLEHMEELQEQVALLTERLRDAENESMAKIAELEKQLSQARKELETLRERFSESTAMGPSRRPPEPEKAPPAAPTRPSALELKVEELEEKGLIRILRGPGDAVSIEILPVAVATPSGGDAPTPGVPTGSPSPDLAPAAEPAPGAAPPPPPPLPGLPSPQEAPPSAPPQAPPLPGSPEPPPAPPLPGDLPPPPPPPPPPPGTDGPVPPPPPPPPPPPGGPPDALGRRDSELGPGVKAKKPIQTKFRMPLLNWVALKPSQITGTVFTELNDEKVLQELDMSDFEEQFKTKSQGPSLDLSALKSKAAQKAPSKATLIEANRAKNLAITLRKGNLGAERICQAIEAYDLQALGLDFLELLMRFLPTEYERSLITRFEREQRPMEELSEEDRFMLCFSRIPRLPERMTTLTFLGNFPDTAQLLMPQLNAIIAASMSIKSSDKLRQILEIVLAFGNYMNSSKRGAAYGFRLQSLDALLEMKSTDRKQTLLHYLVKVIAEKYPQLTGFHSDLHFLDKAGSVSLDSVLADVRSLQRGLELTQREFVRQDDCMVLKEFLRANSPTMDKLLADSKTAQEAFESVVEYFGENPKTTSPGLFFSLFSRFIKAYKKAEQEVEQWKKEAAAQEAGADTPGKGEPPAPKSPPKARRPQMDLISELKRRQQKEPLIYESDRDGAIEDIITVIKTVPFTARTGKRTSRLLCEASLGEEMPL.

Low complexity predominate over residues 1–13 (MGNAAGSAEQPAG). Disordered stretches follow at residues 1-31 (MGNA…PMPA), 167-200 (STDN…PKSR), 446-474 (RFSE…TRPS), and 510-635 (TPSG…AKKP). The N-myristoyl glycine moiety is linked to residue Gly-2. A Phosphoserine modification is found at Ser-7. The segment covering 14–28 (PAAPPPKQPAPPKQP) has biased composition (pro residues). A GBD/FH3 domain is found at 27–468 (QPMPAAGELE…PPEPEKAPPA (442 aa)). Ser-184 carries the phosphoserine modification. Residues 517-538 (PTPGVPTGSPSPDLAPAAEPAP) show a composition bias toward low complexity. The span at 539–615 (GAAPPPPPPL…PPPPPPPGGP (77 aa)) shows a compositional bias: pro residues. A phosphoserine mark is found at Ser-624 and Ser-693. The region spanning 632–1023 (AKKPIQTKFR…QEAGADTPGK (392 aa)) is the FH2 domain. The segment at 1008-1037 (KKEAAAQEAGADTPGKGEPPAPKSPPKARR) is disordered. The span at 1013–1023 (AQEAGADTPGK) shows a compositional bias: low complexity. Ser-1031 carries the phosphoserine modification. A DAD domain is found at 1059-1090 (SDRDGAIEDIITVIKTVPFTARTGKRTSRLLC).

This sequence belongs to the formin homology family. As to quaternary structure, interacts with RAC1, PFN1 and PFN2. Interacts (activated by RAC1) with SRGAP2 (via SH3 domain); regulates the actin filament severing activity of FMNL1. Post-translationally, myristoylation mediates membrane localization and blebbing. In terms of tissue distribution, expressed in heart, brain, placenta, lung, liver, skeletal muscle, kidney and pancreas.

The protein resides in the cytoplasm. It is found in the cell membrane. The protein localises to the cytoplasmic vesicle. Its subcellular location is the phagosome. It localises to the cell cortex. The protein resides in the cell projection. It is found in the bleb. Functionally, may play a role in the control of cell motility and survival of macrophages. Plays a role in the regulation of cell morphology and cytoskeletal organization. Required in the cortical actin filament dynamics and cell shape. The polypeptide is Formin-like protein 1 (FMNL1) (Homo sapiens (Human)).